A 486-amino-acid polypeptide reads, in one-letter code: Methionine aminopeptidase 2-2 (486 aa).

Residues 1-10 show a composition bias toward basic and acidic residues; that stretch reads MGSKSPEGHR. Positions 1–120 are disordered; sequence MGSKSPEGHR…ALPATELKQT (120 aa). The span at 46–56 shows a compositional bias: acidic residues; sequence GDDDDDEDAEE. Positions 93 to 108 are enriched in basic residues; that stretch reads KKKKRKKSNKKKKKTK. Histidine 238 is a substrate binding site. Positions 259, 270, and 339 each coordinate a divalent metal cation. Histidine 347 provides a ligand contact to substrate. 2 residues coordinate a divalent metal cation: glutamate 372 and glutamate 467.

This sequence belongs to the peptidase M24A family. Methionine aminopeptidase eukaryotic type 2 subfamily. Requires Co(2+) as cofactor. Zn(2+) is required as a cofactor. It depends on Mn(2+) as a cofactor. Fe(2+) serves as cofactor.

It is found in the cytoplasm. The enzyme catalyses Release of N-terminal amino acids, preferentially methionine, from peptides and arylamides.. Its function is as follows. Cotranslationally removes the N-terminal methionine from nascent proteins. The N-terminal methionine is often cleaved when the second residue in the primary sequence is small and uncharged (Met-Ala-, Cys, Gly, Pro, Ser, Thr, or Val). The protein is Methionine aminopeptidase 2-2 of Aspergillus fumigatus (strain ATCC MYA-4609 / CBS 101355 / FGSC A1100 / Af293) (Neosartorya fumigata).